The following is a 256-amino-acid chain: Phosphonates import ATP-binding protein PhnC (256 aa).

An ABC transporter domain is found at 3–247; that stretch reads LELKNISKTY…VLHKEIFTNV (245 aa). 36–43 contributes to the ATP binding site; the sequence is GLSGAGKS.

The protein belongs to the ABC transporter superfamily. Phosphonates importer (TC 3.A.1.9.1) family. As to quaternary structure, the complex is composed of two ATP-binding proteins (PhnC), two transmembrane proteins (PhnE) and a solute-binding protein (PhnD).

The protein localises to the cell inner membrane. It carries out the reaction phosphonate(out) + ATP + H2O = phosphonate(in) + ADP + phosphate + H(+). Functionally, part of the ABC transporter complex PhnCDE involved in phosphonates import. Responsible for energy coupling to the transport system. This Treponema denticola (strain ATCC 35405 / DSM 14222 / CIP 103919 / JCM 8153 / KCTC 15104) protein is Phosphonates import ATP-binding protein PhnC.